Reading from the N-terminus, the 379-residue chain is Cytochrome b (379 aa).

The next 4 membrane-spanning stretches (helical) occupy residues 32 to 52 (YGSL…VLAT), 76 to 98 (WLLR…LHIG), 111 to 131 (VWNI…LGYV), and 177 to 197 (FFAL…LHIF). Heme b is bound by residues His-82 and His-96. Positions 181 and 195 each coordinate heme b. His-200 contacts a ubiquinone. Transmembrane regions (helical) follow at residues 223–243 (YSVK…VFTL), 287–304 (LGGV…FLFS), 320–340 (LARL…WLGS), and 348–367 (NEVA…TMCA).

Belongs to the cytochrome b family. As to quaternary structure, the main subunits of complex b-c1 are: cytochrome b, cytochrome c1 and the Rieske protein. Heme b is required as a cofactor.

The protein localises to the mitochondrion inner membrane. Component of the ubiquinol-cytochrome c reductase complex (complex III or cytochrome b-c1 complex) that is part of the mitochondrial respiratory chain. The b-c1 complex mediates electron transfer from ubiquinol to cytochrome c. Contributes to the generation of a proton gradient across the mitochondrial membrane that is then used for ATP synthesis. The sequence is that of Cytochrome b (mt:Cyt-b) from Brachionus plicatilis (Marine rotifer).